The following is a 311-amino-acid chain: Dermonecrotic toxin LlSicTox-alphaIII1i (311 aa).

The signal sequence occupies residues Met1 to Thr21. The propeptide occupies Asp22 to Arg26. Residue His38 is part of the active site. Positions 58 and 60 each coordinate Mg(2+). Residue His73 is the Nucleophile of the active site. A disulfide bond links Cys77 and Cys83. Asp117 provides a ligand contact to Mg(2+).

It belongs to the arthropod phospholipase D family. Class I subfamily. Mg(2+) serves as cofactor. Expressed by the venom gland.

It localises to the secreted. The enzyme catalyses an N-(acyl)-sphingosylphosphocholine = an N-(acyl)-sphingosyl-1,3-cyclic phosphate + choline. It catalyses the reaction an N-(acyl)-sphingosylphosphoethanolamine = an N-(acyl)-sphingosyl-1,3-cyclic phosphate + ethanolamine. The catalysed reaction is a 1-acyl-sn-glycero-3-phosphocholine = a 1-acyl-sn-glycero-2,3-cyclic phosphate + choline. It carries out the reaction a 1-acyl-sn-glycero-3-phosphoethanolamine = a 1-acyl-sn-glycero-2,3-cyclic phosphate + ethanolamine. Its function is as follows. Dermonecrotic toxins cleave the phosphodiester linkage between the phosphate and headgroup of certain phospholipids (sphingolipid and lysolipid substrates), forming an alcohol (often choline) and a cyclic phosphate. This toxin acts on sphingomyelin (SM) with high activity. It also act on acyl- and alkyl-lysophosphatidylcholine (LPC), but not on sphingosylphosphorylcholine (SPC) and phosphatidylcholine (PC). It may also act on ceramide phosphoethanolamine (CPE), and lysophosphatidylethanolamine (LPE), but not on lysophosphatidylserine (LPS), and lysophosphatidylglycerol (LPG). It acts by transphosphatidylation, releasing exclusively cyclic phosphate products as second products. Induces complement-dependent hemolysis and dermonecrosis. Also induces increased vascular permeability, edema, inflammatory response, and platelet aggregation. The sequence is that of Dermonecrotic toxin LlSicTox-alphaIII1i from Loxosceles laeta (South American recluse spider).